The sequence spans 185 residues: MHSVMETLFSQLIQEIGEDVSREGLVDTPKRAASAFRFLNSGYHQSLDHVLNNAVFEADSEDMVIVKDIELYSLCEHHLLPFIGKCHVGYLPQGKVIGLSKIARIVEMYARRLQIQERLTKQIADAIQTAVNPRGVAVVVEAKHLCMMMRGVEKQNSVMTTSSMLGLFRKQSSTRAEFLDLIGRK.

Zn(2+)-binding residues include cysteine 75, histidine 78, and cysteine 146.

It belongs to the GTP cyclohydrolase I family. As to quaternary structure, toroid-shaped homodecamer, composed of two pentamers of five dimers.

It carries out the reaction GTP + H2O = 7,8-dihydroneopterin 3'-triphosphate + formate + H(+). The protein operates within cofactor biosynthesis; 7,8-dihydroneopterin triphosphate biosynthesis; 7,8-dihydroneopterin triphosphate from GTP: step 1/1. This chain is GTP cyclohydrolase 1, found in Methylococcus capsulatus (strain ATCC 33009 / NCIMB 11132 / Bath).